The following is a 297-amino-acid chain: Acetyl-coenzyme A carboxylase carboxyl transferase subunit beta (297 aa).

The CoA carboxyltransferase N-terminal domain maps to 27-296 (LWHKCPSCEA…PEEAREAAAV (270 aa)). 4 residues coordinate Zn(2+): Cys-31, Cys-34, Cys-50, and Cys-53. The segment at 31 to 53 (CPSCEAVLYRPELEKTLDVCPKC) adopts a C4-type zinc-finger fold.

It belongs to the AccD/PCCB family. As to quaternary structure, acetyl-CoA carboxylase is a heterohexamer composed of biotin carboxyl carrier protein (AccB), biotin carboxylase (AccC) and two subunits each of ACCase subunit alpha (AccA) and ACCase subunit beta (AccD). Requires Zn(2+) as cofactor.

It localises to the cytoplasm. It catalyses the reaction N(6)-carboxybiotinyl-L-lysyl-[protein] + acetyl-CoA = N(6)-biotinyl-L-lysyl-[protein] + malonyl-CoA. It functions in the pathway lipid metabolism; malonyl-CoA biosynthesis; malonyl-CoA from acetyl-CoA: step 1/1. In terms of biological role, component of the acetyl coenzyme A carboxylase (ACC) complex. Biotin carboxylase (BC) catalyzes the carboxylation of biotin on its carrier protein (BCCP) and then the CO(2) group is transferred by the transcarboxylase to acetyl-CoA to form malonyl-CoA. The polypeptide is Acetyl-coenzyme A carboxylase carboxyl transferase subunit beta (Pseudomonas putida (strain ATCC 700007 / DSM 6899 / JCM 31910 / BCRC 17059 / LMG 24140 / F1)).